Consider the following 161-residue polypeptide: Vasotocin-neurophysin VT (161 aa).

Positions 1 to 19 are cleaved as a signal peptide; that stretch reads MAEPSLPLSFLCLLALSSA. Residues Cys-20 and Cys-25 are joined by a disulfide bond. Gly-28 is subject to Glycine amide. Cystine bridges form between Cys-41–Cys-85, Cys-44–Cys-58, Cys-52–Cys-75, Cys-59–Cys-65, Cys-92–Cys-104, Cys-98–Cys-116, and Cys-105–Cys-110.

The protein belongs to the vasopressin/oxytocin family. In terms of processing, seven disulfide bonds are present in neurophysin.

The protein localises to the secreted. Vasotocin is an antidiuretic hormone. In Gallus gallus (Chicken), this protein is Vasotocin-neurophysin VT.